Consider the following 396-residue polypeptide: Interleukin enhancer-binding factor 2 homolog (396 aa).

The DZF domain occupies lysine 22–isoleucine 379. A disordered region spans residues proline 367 to glutamate 396. A compositionally biased stretch (acidic residues) spans aspartate 374–glutamate 396.

It is found in the nucleus. In terms of biological role, may regulate transcription of undefined genes. This chain is Interleukin enhancer-binding factor 2 homolog, found in Drosophila melanogaster (Fruit fly).